The chain runs to 263 residues: Putative hydro-lyase GK2103 (263 aa).

This sequence belongs to the D-glutamate cyclase family.

The polypeptide is Putative hydro-lyase GK2103 (Geobacillus kaustophilus (strain HTA426)).